A 1130-amino-acid polypeptide reads, in one-letter code: Sterol regulatory element-binding protein 2 (1130 aa).

The transcriptional activation (acidic) stretch occupies residues 1-50 (MDESSELGVLETMETLTELGDELTLGDIDEMLQFVSNQVGEFPDLFSEQL). Topologically, residues 1 to 470 (MDESSELGVL…VALGMVDRSR (470 aa)) are cytoplasmic. The tract at residues 53–133 (SFPGGGSNGG…PQPQPQPPAQ (81 aa)) is disordered. Over residues 55 to 64 (PGGGSNGGSG) the composition is skewed to gly residues. The segment covering 83-93 (RSFSQVPLSTF) has biased composition (polar residues). The span at 94–104 (SPSAASPQAPA) shows a compositional bias: low complexity. Residues 111–131 (PTPPRATPVLQPRPQPQPQPP) show a composition bias toward pro residues. The interaction with LMNA stretch occupies residues 226-480 (QQVPVLVQPQ…ILLCVLTFLG (255 aa)). Positions 319-369 (ERRTTHNIIEKRYRSSINDKIIELKDLVMGTDAKMHKSGVLRKAIDYIKYL) constitute a bHLH domain. Positions 369 to 390 (LQQVNHKLRQENMVLKLANQKN) are leucine-zipper. Residue K453 forms a Glycyl lysine isopeptide (Lys-Gly) (interchain with G-Cter in SUMO2) linkage. The helical transmembrane segment at 471 to 491 (ILLCVLTFLGLSFNPLTSLLQ) threads the bilayer. Residues 492–522 (WGGAHNTDQHPYSGSGRSVLSLESGAGGWFD) lie on the Lumenal side of the membrane. A helical membrane pass occupies residues 523-543 (WMVPTLLLWLVNGVIVLSVFV). Over 544-1130 (KLLVHGEPVI…LGGGTAIAAS (587 aa)) the chain is Cytoplasmic. A Phosphoserine modification is found at S1087.

It belongs to the SREBP family. As to quaternary structure, forms a tight complex with SCAP, the SCAP-SREBP complex, in the endoplasmic reticulum membrane and the Golgi apparatus. Interacts with PAQR3; the interaction anchors the SCAP-SREBP complex to the Golgi apparatus in low cholesterol conditions. Interacts (via C-terminal domain) with RNF139. Homodimer; efficient DNA binding of the soluble transcription factor fragment requires dimerization with another bHLH protein. Interacts with LMNA. Post-translationally, processed in the Golgi apparatus, releasing the protein from the membrane. At low cholesterol the SCAP-SREBP complex is recruited into COPII vesicles for export from the endoplasmic reticulum. In the Golgi, complex SREBPs are cleaved sequentially by site-1 (MBTPS1, S1P) and site-2 (MBTPS2, S2P) proteases. The first cleavage by site-1 protease occurs within the luminal loop, the second cleavage by site-2 protease occurs within the first transmembrane domain, releasing the transcription factor from the Golgi membrane. Apoptosis triggers cleavage by the cysteine proteases caspase-3 and caspase-7. Cleavage and activation is induced by mediated cholesterol efflux. Phosphorylated by AMPK, leading to suppress protein processing and nuclear translocation, and repress target gene expression. In terms of processing, SCAP-free SREBF2 is ubiquitinated by the BCR(ARMC5) complex, leading to its degradation. Post-translationally, ubiquitinated; the nuclear form has a rapid turnover and is rapidly ubiquitinated and degraded by the proteasome in the nucleus.

The protein resides in the endoplasmic reticulum membrane. Its subcellular location is the golgi apparatus membrane. The protein localises to the cytoplasmic vesicle. It is found in the COPII-coated vesicle membrane. It localises to the nucleus. Activation by cleavage is down-regulated upon activation of SIRT3-dependent PRKAA1/AMPK-alpha signaling cascade which leads to inhibition of ATP-consuming lipogenesis to restore cellular energy balance. Functionally, precursor of the transcription factor form (Processed sterol regulatory element-binding protein 2), which is embedded in the endoplasmic reticulum membrane. Low sterol concentrations promote processing of this form, releasing the transcription factor form that translocates into the nucleus and activates transcription of genes involved in cholesterol biosynthesis. Its function is as follows. Key transcription factor that regulates expression of genes involved in cholesterol biosynthesis. Binds to the sterol regulatory element 1 (SRE-1) (5'-ATCACCCCAC-3'). Has dual sequence specificity binding to both an E-box motif (5'-ATCACGTGA-3') and to SRE-1 (5'-ATCACCCCAC-3'). Regulates transcription of genes related to cholesterol synthesis pathway. This Mus musculus (Mouse) protein is Sterol regulatory element-binding protein 2.